Consider the following 707-residue polypeptide: Early transcription factor 82 kDa subunit (707 aa).

This sequence belongs to the poxviridae VETF large subunit family. Heterodimer of a 70 kDa and a 82 kDa subunit. Part of the early transcription complex composed of ETF, RAP94, and the DNA-directed RNA polymerase.

It is found in the virion. Acts with RNA polymerase to initiate transcription from early gene promoters. Is recruited by the RPO-associated protein of 94 kDa (RAP94) to form the early transcription complex, which also contains the core RNA polymerase. ETF heterodimer binds to early gene promoters. In Molluscum contagiosum virus subtype 1 (MOCV), this protein is Early transcription factor 82 kDa subunit (VETFL).